Reading from the N-terminus, the 97-residue chain is Small ribosomal subunit protein bS20 (97 aa).

A compositionally biased stretch (basic residues) spans 76-85 (RNNGARKKAG). A disordered region spans residues 76–97 (RNNGARKKAGLAKALQKVSQAS). Over residues 86 to 97 (LAKALQKVSQAS) the composition is skewed to low complexity.

The protein belongs to the bacterial ribosomal protein bS20 family.

Its function is as follows. Binds directly to 16S ribosomal RNA. This Microcystis aeruginosa (strain NIES-843 / IAM M-2473) protein is Small ribosomal subunit protein bS20.